Reading from the N-terminus, the 124-residue chain is UPF0102 protein Noca_3248 (124 aa).

Belongs to the UPF0102 family.

This chain is UPF0102 protein Noca_3248, found in Nocardioides sp. (strain ATCC BAA-499 / JS614).